We begin with the raw amino-acid sequence, 203 residues long: Putative archaetidylserine decarboxylase proenzyme (203 aa).

The Schiff-base intermediate with substrate; via pyruvic acid role is filled by Ser171. Ser171 carries the pyruvic acid (Ser); by autocatalysis modification.

It belongs to the phosphatidylserine decarboxylase family. PSD-A subfamily. As to quaternary structure, heterodimer of a large membrane-associated beta subunit and a small pyruvoyl-containing alpha subunit. The cofactor is pyruvate. In terms of processing, is synthesized initially as an inactive proenzyme. Formation of the active enzyme involves a self-maturation process in which the active site pyruvoyl group is generated from an internal serine residue via an autocatalytic post-translational modification. Two non-identical subunits are generated from the proenzyme in this reaction, and the pyruvate is formed at the N-terminus of the alpha chain, which is derived from the carboxyl end of the proenzyme. The post-translation cleavage follows an unusual pathway, termed non-hydrolytic serinolysis, in which the side chain hydroxyl group of the serine supplies its oxygen atom to form the C-terminus of the beta chain, while the remainder of the serine residue undergoes an oxidative deamination to produce ammonia and the pyruvoyl prosthetic group on the alpha chain.

The protein localises to the cell membrane. It carries out the reaction archaetidylserine + H(+) = archaetidylethanolamine + CO2. In terms of biological role, catalyzes the formation of archaetidylethanolamine (PtdEtn) from archaetidylserine (PtdSer). The chain is Putative archaetidylserine decarboxylase proenzyme from Methanosarcina barkeri (strain Fusaro / DSM 804).